We begin with the raw amino-acid sequence, 785 residues long: Endonuclease MutS2 (785 aa).

Residue 331 to 338 coordinates ATP; that stretch reads GPNTGGKT. Positions 710-785 constitute a Smr domain; it reads LDLRGLYADE…GLGVTVVELA (76 aa).

This sequence belongs to the DNA mismatch repair MutS family. MutS2 subfamily. Homodimer. Binds to stalled ribosomes, contacting rRNA.

Functionally, endonuclease that is involved in the suppression of homologous recombination and thus may have a key role in the control of bacterial genetic diversity. Its function is as follows. Acts as a ribosome collision sensor, splitting the ribosome into its 2 subunits. Detects stalled/collided 70S ribosomes which it binds and splits by an ATP-hydrolysis driven conformational change. Acts upstream of the ribosome quality control system (RQC), a ribosome-associated complex that mediates the extraction of incompletely synthesized nascent chains from stalled ribosomes and their subsequent degradation. Probably generates substrates for RQC. The polypeptide is Endonuclease MutS2 (Pelotomaculum thermopropionicum (strain DSM 13744 / JCM 10971 / SI)).